We begin with the raw amino-acid sequence, 510 residues long: ATP synthase subunit alpha (510 aa).

Residue 169-176 (GDRQTGKT) participates in ATP binding.

The protein belongs to the ATPase alpha/beta chains family. In terms of assembly, F-type ATPases have 2 components, CF(1) - the catalytic core - and CF(0) - the membrane proton channel. CF(1) has five subunits: alpha(3), beta(3), gamma(1), delta(1), epsilon(1). CF(0) has four main subunits: a(1), b(1), b'(1) and c(9-12).

Its subcellular location is the cell inner membrane. It catalyses the reaction ATP + H2O + 4 H(+)(in) = ADP + phosphate + 5 H(+)(out). Produces ATP from ADP in the presence of a proton gradient across the membrane. The alpha chain is a regulatory subunit. In Rhodopseudomonas palustris (strain BisB5), this protein is ATP synthase subunit alpha.